A 319-amino-acid polypeptide reads, in one-letter code: MARKKIALVGAGQIGGTLALLAGQKELGDIVLLDIPDAEGVAKGKALDIAEASPVEGFDAGYTGTSNYADLAGADVVIVTAGVPRKPGMSRDDLVGINARIIKAVGEGIRTHAPDAFVIVITNPLDAMVGLMQQVTGFDPAKVVGMAGVLDSARFRWFLAEEFKVSVEDVTAFVLGGHGDTMVPSVRYSTVAGIPLPDLVKMGWTTQEKLDQIVQRTRDGGAEIVGLLKTGSAFYAPAASAIAMAESYLKDKKRVMPCAARLTGQYGVDGLYIGVPVVIGAGGVEKIVEIELNAEEQAMFDKSVAAVKSLVEVTAKVAG.

NAD(+)-binding positions include 10-15 (GAGQIG) and D34. Residues R85 and R91 each coordinate substrate. NAD(+) is bound by residues N98 and 121–123 (ITN). Residues N123 and R154 each contribute to the substrate site. H178 acts as the Proton acceptor in catalysis.

The protein belongs to the LDH/MDH superfamily. MDH type 3 family.

The enzyme catalyses (S)-malate + NAD(+) = oxaloacetate + NADH + H(+). Its function is as follows. Catalyzes the reversible oxidation of malate to oxaloacetate. The polypeptide is Malate dehydrogenase (Rhodospirillum centenum (strain ATCC 51521 / SW)).